A 212-amino-acid chain; its full sequence is MYNKLQYISQGNTIEDQVRNIHQALDSGCDWIQMRFKNQTEKDSFILAEEIKLLCEKYLASFIINDNLYLAQQINADGVHLGLSDMKIDEARTILGAEKIIGGTANTFEDIQNHVKNGCNYIGLGPFRFTNTKEKLSPILGLSGYFEILQKMKKNKIEVPVYAIGGITLKDINPLMETGIHGIAVSGIITESDEKKILIQQLNEKLYANVIV.

Residues 33–37 and Asn-65 contribute to the 4-amino-2-methyl-5-(diphosphooxymethyl)pyrimidine site; that span reads QMRFK. Residues Asp-66 and Asp-85 each coordinate Mg(2+). Thr-104 is a 4-amino-2-methyl-5-(diphosphooxymethyl)pyrimidine binding site. 130 to 132 is a 2-[(2R,5Z)-2-carboxy-4-methylthiazol-5(2H)-ylidene]ethyl phosphate binding site; that stretch reads TNT. Residue Lys-133 coordinates 4-amino-2-methyl-5-(diphosphooxymethyl)pyrimidine. Gly-166 is a binding site for 2-[(2R,5Z)-2-carboxy-4-methylthiazol-5(2H)-ylidene]ethyl phosphate.

It belongs to the thiamine-phosphate synthase family. Mg(2+) serves as cofactor.

It catalyses the reaction 2-[(2R,5Z)-2-carboxy-4-methylthiazol-5(2H)-ylidene]ethyl phosphate + 4-amino-2-methyl-5-(diphosphooxymethyl)pyrimidine + 2 H(+) = thiamine phosphate + CO2 + diphosphate. The enzyme catalyses 2-(2-carboxy-4-methylthiazol-5-yl)ethyl phosphate + 4-amino-2-methyl-5-(diphosphooxymethyl)pyrimidine + 2 H(+) = thiamine phosphate + CO2 + diphosphate. It carries out the reaction 4-methyl-5-(2-phosphooxyethyl)-thiazole + 4-amino-2-methyl-5-(diphosphooxymethyl)pyrimidine + H(+) = thiamine phosphate + diphosphate. It functions in the pathway cofactor biosynthesis; thiamine diphosphate biosynthesis; thiamine phosphate from 4-amino-2-methyl-5-diphosphomethylpyrimidine and 4-methyl-5-(2-phosphoethyl)-thiazole: step 1/1. Condenses 4-methyl-5-(beta-hydroxyethyl)thiazole monophosphate (THZ-P) and 2-methyl-4-amino-5-hydroxymethyl pyrimidine pyrophosphate (HMP-PP) to form thiamine monophosphate (TMP). The polypeptide is Thiamine-phosphate synthase (Flavobacterium johnsoniae (strain ATCC 17061 / DSM 2064 / JCM 8514 / BCRC 14874 / CCUG 350202 / NBRC 14942 / NCIMB 11054 / UW101) (Cytophaga johnsonae)).